Consider the following 448-residue polypeptide: Adenylosuccinate synthetase (448 aa).

Residues 22–28 (GDEGKGK) and 50–52 (GHT) each bind GTP. Asp-23 serves as the catalytic Proton acceptor. Residues Asp-23 and Gly-50 each contribute to the Mg(2+) site. IMP-binding positions include 23–26 (DEGK), 48–51 (NAGH), Thr-139, Arg-153, Gln-234, Thr-249, and Arg-321. The active-site Proton donor is the His-51. Substrate is bound at residue 317–323 (SVTGRPR). Residues Arg-323, 349–351 (KLD), and 431–433 (STG) each bind GTP.

This sequence belongs to the adenylosuccinate synthetase family. Homodimer. The cofactor is Mg(2+).

The protein resides in the cytoplasm. It carries out the reaction IMP + L-aspartate + GTP = N(6)-(1,2-dicarboxyethyl)-AMP + GDP + phosphate + 2 H(+). It participates in purine metabolism; AMP biosynthesis via de novo pathway; AMP from IMP: step 1/2. In terms of biological role, plays an important role in the de novo pathway of purine nucleotide biosynthesis. Catalyzes the first committed step in the biosynthesis of AMP from IMP. The protein is Adenylosuccinate synthetase of Paraburkholderia xenovorans (strain LB400).